Consider the following 238-residue polypeptide: Uridylate kinase (238 aa).

12–15 provides a ligand contact to ATP; sequence KLSG. The involved in allosteric activation by GTP stretch occupies residues 20 to 25; it reads GEKGFG. Position 54 (Gly54) interacts with UMP. ATP-binding residues include Gly55 and Arg59. UMP is bound by residues Asp72 and 133-140; that span reads TGNPYFST. Residues Tyr166 and Asp169 each contribute to the ATP site.

This sequence belongs to the UMP kinase family. As to quaternary structure, homohexamer.

It is found in the cytoplasm. It carries out the reaction UMP + ATP = UDP + ADP. The protein operates within pyrimidine metabolism; CTP biosynthesis via de novo pathway; UDP from UMP (UMPK route): step 1/1. Its activity is regulated as follows. Allosterically activated by GTP. Inhibited by UTP. Catalyzes the reversible phosphorylation of UMP to UDP. The chain is Uridylate kinase from Clostridium botulinum (strain Langeland / NCTC 10281 / Type F).